The following is a 360-amino-acid chain: Phospho-N-acetylmuramoyl-pentapeptide-transferase (360 aa).

10 consecutive transmembrane segments (helical) span residues 26–46 (AIMSVLTALILSLWMGPRLIA), 70–90 (GTPTMGGIMILAAITITALLW), 94–114 (SNPYIWAVLAVMLGYGVVGFV), 132–152 (WKYFWQSVIALVIAFALYMHG), 168–188 (VMPQLGLLYIVLTYFVIVGTS), 199–219 (GLAIMPTVMVAGGMAFIAWAT), 239–259 (LVVLCTAIVGAGLGFLWFNTY), 263–283 (VFMGDVGSLALGGALGTIAVL), 288–308 (LLLVIMGGVFVMETVSVILQV), and 338–358 (VIVRFWIITLMLVLIALATLK).

It belongs to the glycosyltransferase 4 family. MraY subfamily. Mg(2+) serves as cofactor.

It localises to the cell inner membrane. It catalyses the reaction UDP-N-acetyl-alpha-D-muramoyl-L-alanyl-gamma-D-glutamyl-meso-2,6-diaminopimeloyl-D-alanyl-D-alanine + di-trans,octa-cis-undecaprenyl phosphate = di-trans,octa-cis-undecaprenyl diphospho-N-acetyl-alpha-D-muramoyl-L-alanyl-D-glutamyl-meso-2,6-diaminopimeloyl-D-alanyl-D-alanine + UMP. It functions in the pathway cell wall biogenesis; peptidoglycan biosynthesis. Its function is as follows. Catalyzes the initial step of the lipid cycle reactions in the biosynthesis of the cell wall peptidoglycan: transfers peptidoglycan precursor phospho-MurNAc-pentapeptide from UDP-MurNAc-pentapeptide onto the lipid carrier undecaprenyl phosphate, yielding undecaprenyl-pyrophosphoryl-MurNAc-pentapeptide, known as lipid I. This chain is Phospho-N-acetylmuramoyl-pentapeptide-transferase, found in Photobacterium profundum (strain SS9).